Here is a 391-residue protein sequence, read N- to C-terminus: Multidrug resistance protein MdtL (391 aa).

Residues 1–3 (MSR) lie on the Cytoplasmic side of the membrane. The helical transmembrane segment at 4 to 24 (FLICSFALVLLYPAGIDMYLV) threads the bilayer. Residues 25 to 37 (GLPRIAADLNASE) are Periplasmic-facing. A helical membrane pass occupies residues 38-58 (AQLHIAFSVYLAGMAAAMLFA). Residues 59 to 75 (GKMADRSGRKPVAIPGS) are Cytoplasmic-facing. Residues 76-96 (ALFIIASVFCSLAETSTLFLA) traverse the membrane as a helical segment. At 97-98 (GR) the chain is on the periplasmic side. The chain crosses the membrane as a helical span at residues 99-119 (FLQGLGAGCCYVVAFAILRDT). Residues 120-130 (LDDRRRAKVLS) are Cytoplasmic-facing. A helical transmembrane segment spans residues 131-151 (LLNGITCIIPVLAPVLGHLIM). The Periplasmic portion of the chain corresponds to 152-157 (LKFPWQ). The chain crosses the membrane as a helical span at residues 158-178 (SLFWAMAMMGIAVLMLSLFIL). Residues 179–202 (KETRPASPAASDKPRENSESLLNR) lie on the Cytoplasmic side of the membrane. A helical membrane pass occupies residues 203-222 (FFLSRVVITTLSVSVILTFV). Over 223–244 (NTSPVLLMEIMGFERGEYATIM) the chain is Periplasmic. Residues 245–265 (ALTAGVSMTFSFSTPFALGIF) form a helical membrane-spanning segment. Residues 266 to 268 (KPR) lie on the Cytoplasmic side of the membrane. The chain crosses the membrane as a helical span at residues 269 to 289 (TLMITSQVLFLAAGITLAVSP). At 290-292 (SHA) the chain is on the periplasmic side. A helical membrane pass occupies residues 293–313 (VSLFGITLICAGFSVGFGVAM). Residues 314 to 330 (SQALGPFSLRAGVASST) lie on the Cytoplasmic side of the membrane. A helical membrane pass occupies residues 331–351 (LGIAQVCGSSLWIWLAAVVGI). At 352–355 (GAWN) the chain is on the periplasmic side. The chain crosses the membrane as a helical span at residues 356 to 376 (MLIGILIACSIVSLLLIMFVA). Residues 377 to 391 (PGRPVAAHEEIHHHA) lie on the Cytoplasmic side of the membrane.

This sequence belongs to the major facilitator superfamily. DHA1 family. MdtL (TC 2.A.1.2.22) subfamily.

It is found in the cell inner membrane. The chain is Multidrug resistance protein MdtL from Shigella flexneri serotype 5b (strain 8401).